The primary structure comprises 130 residues: Hypocretin neuropeptide precursor (130 aa).

An N-terminal signal peptide occupies residues 1-32 (MNPPSTKVPWAAVTLLLLLLLPPALLSPGAAA). Gln-33 is modified (pyrrolidone carboxylic acid). 2 disulfide bridges follow: Cys-38/Cys-44 and Cys-39/Cys-46. Position 65 is a leucine amide (Leu-65). Met-96 carries the post-translational modification Methionine amide. Residues 97 to 130 (GRRAGAEPAPRPCPGRRCPVVAVPSAAPGGRSGV) constitute a propeptide, removed in mature form.

Belongs to the orexin family. Specific enzymatic cleavages at paired basic residues yield the different active peptides.

The protein localises to the rough endoplasmic reticulum. The protein resides in the cytoplasmic vesicle. Its subcellular location is the synapse. Functionally, neuropeptides that play a significant role in the regulation of food intake and sleep-wakefulness, possibly by coordinating the complex behavioral and physiologic responses of these complementary homeostatic functions. A broader role in the homeostatic regulation of energy metabolism, autonomic function, hormonal balance and the regulation of body fluids, is also suggested. Binds to orexin receptors HCRTR1/OX1R and HCRTR2/OX2R with a high affinity. Stimulates food intake. Modulates pituitary luteinizing hormone secretion in an ovarian steroid-dependent manner. Its function is as follows. Binds to orexin receptor HCRTR2/OX2R only. Stimulates food intake. Modulates pituitary luteinizing hormone secretion in an ovarian steroid-dependent manner. In Canis lupus familiaris (Dog), this protein is Hypocretin neuropeptide precursor (HCRT).